Reading from the N-terminus, the 118-residue chain is Holo-[acyl-carrier-protein] synthase (118 aa).

Mg(2+) contacts are provided by aspartate 8 and glutamate 50.

This sequence belongs to the P-Pant transferase superfamily. AcpS family. The cofactor is Mg(2+).

Its subcellular location is the cytoplasm. The catalysed reaction is apo-[ACP] + CoA = holo-[ACP] + adenosine 3',5'-bisphosphate + H(+). Its function is as follows. Transfers the 4'-phosphopantetheine moiety from coenzyme A to a Ser of acyl-carrier-protein. The chain is Holo-[acyl-carrier-protein] synthase from Leifsonia xyli subsp. xyli (strain CTCB07).